The chain runs to 576 residues: Proline--tRNA ligase (576 aa).

Belongs to the class-II aminoacyl-tRNA synthetase family. ProS type 1 subfamily. As to quaternary structure, homodimer.

It localises to the cytoplasm. It carries out the reaction tRNA(Pro) + L-proline + ATP = L-prolyl-tRNA(Pro) + AMP + diphosphate. Functionally, catalyzes the attachment of proline to tRNA(Pro) in a two-step reaction: proline is first activated by ATP to form Pro-AMP and then transferred to the acceptor end of tRNA(Pro). As ProRS can inadvertently accommodate and process non-cognate amino acids such as alanine and cysteine, to avoid such errors it has two additional distinct editing activities against alanine. One activity is designated as 'pretransfer' editing and involves the tRNA(Pro)-independent hydrolysis of activated Ala-AMP. The other activity is designated 'posttransfer' editing and involves deacylation of mischarged Ala-tRNA(Pro). The misacylated Cys-tRNA(Pro) is not edited by ProRS. The chain is Proline--tRNA ligase from Bordetella parapertussis (strain 12822 / ATCC BAA-587 / NCTC 13253).